The chain runs to 326 residues: MSKSERRVFLLDFEKPLYELEEKINQIRELAEEKNVDVSEQLSQLESRAEQLRQEIFSNLNPSQRLQLARHPRRPSTLDYIQAIADDWFEMHGDRGGYDDPALVGGVARLGTRPVVIMGHQKGRDTKDNVARNFGMAAPNGYRKALRLMEHADRFGMPIITFIDTPGAWAGIDAEKLGQGEAIAVNLREMFRLDVPILCTVIGEGGSGGALGIGVGDRVLMLENAVYTVATPEACAAILWKDAKKSDKAAIALKITADDLAKLQIIDGIIPEPKGAAHANPLGAAAKLKEALLFHLNTLAQLTPQERKQLRYDKFRHLGQFLETAV.

In terms of domain architecture, CoA carboxyltransferase C-terminal spans 44-298 (QLESRAEQLR…KEALLFHLNT (255 aa)).

The protein belongs to the AccA family. As to quaternary structure, acetyl-CoA carboxylase is a heterohexamer composed of biotin carboxyl carrier protein (AccB), biotin carboxylase (AccC) and two subunits each of ACCase subunit alpha (AccA) and ACCase subunit beta (AccD).

The protein localises to the cytoplasm. It carries out the reaction N(6)-carboxybiotinyl-L-lysyl-[protein] + acetyl-CoA = N(6)-biotinyl-L-lysyl-[protein] + malonyl-CoA. It participates in lipid metabolism; malonyl-CoA biosynthesis; malonyl-CoA from acetyl-CoA: step 1/1. Its function is as follows. Component of the acetyl coenzyme A carboxylase (ACC) complex. First, biotin carboxylase catalyzes the carboxylation of biotin on its carrier protein (BCCP) and then the CO(2) group is transferred by the carboxyltransferase to acetyl-CoA to form malonyl-CoA. This is Acetyl-coenzyme A carboxylase carboxyl transferase subunit alpha from Synechocystis sp. (strain ATCC 27184 / PCC 6803 / Kazusa).